Consider the following 144-residue polypeptide: Large ribosomal subunit protein uL15 (144 aa).

Residues 1–56 (MELNNLKPAAGAKHAKRRVGRGIGSGLGKTAGRGHKGQKSRSGGFHKVGFEGGQMP) form a disordered region. The span at 21–31 (RGIGSGLGKTA) shows a compositional bias: gly residues.

The protein belongs to the universal ribosomal protein uL15 family. As to quaternary structure, part of the 50S ribosomal subunit.

Functionally, binds to the 23S rRNA. This Burkholderia cenocepacia (strain HI2424) protein is Large ribosomal subunit protein uL15.